The chain runs to 77 residues: U8-lycotoxin-Ls1w (77 aa).

An N-terminal signal peptide occupies residues 1 to 20 (MKLIIFTGLVLFAIVSLIEA). The propeptide occupies 21–26 (QAENEK).

It belongs to the neurotoxin 19 (CSTX) family. 08 (U8-Lctx) subfamily. In terms of processing, contains 4 disulfide bonds. As to expression, expressed by the venom gland.

Its subcellular location is the secreted. This Lycosa singoriensis (Wolf spider) protein is U8-lycotoxin-Ls1w.